We begin with the raw amino-acid sequence, 191 residues long: ATP-dependent Clp protease proteolytic subunit 1 (191 aa).

The active-site Nucleophile is the Ser-91. Residue His-116 is part of the active site.

The protein belongs to the peptidase S14 family. As to quaternary structure, fourteen ClpP subunits assemble into 2 heptameric rings which stack back to back to give a disk-like structure with a central cavity, resembling the structure of eukaryotic proteasomes.

It localises to the cytoplasm. It catalyses the reaction Hydrolysis of proteins to small peptides in the presence of ATP and magnesium. alpha-casein is the usual test substrate. In the absence of ATP, only oligopeptides shorter than five residues are hydrolyzed (such as succinyl-Leu-Tyr-|-NHMec, and Leu-Tyr-Leu-|-Tyr-Trp, in which cleavage of the -Tyr-|-Leu- and -Tyr-|-Trp bonds also occurs).. Cleaves peptides in various proteins in a process that requires ATP hydrolysis. Has a chymotrypsin-like activity. Plays a major role in the degradation of misfolded proteins. The chain is ATP-dependent Clp protease proteolytic subunit 1 from Chlamydia pneumoniae (Chlamydophila pneumoniae).